The sequence spans 323 residues: Chitinase 1 (323 aa).

An N-terminal signal peptide occupies residues 1-20 (MRALAVVVVATAFAVVAVRG). In terms of domain architecture, Chitin-binding type-1 spans 21-61 (EQCGSQAGGALCPNCLCCSQYGWCGSTSAYCGSGCQSQCSG). Disulfide bonds link C23-C38, C32-C44, C35-C63, C37-C51, C55-C59, C100-C162, C176-C184, and C283-C315. E144 functions as the Proton donor in the catalytic mechanism.

It belongs to the glycosyl hydrolase 19 family. Chitinase class I subfamily. As to expression, expressed in roots, leaves, sheaths and meristems.

The catalysed reaction is Random endo-hydrolysis of N-acetyl-beta-D-glucosaminide (1-&gt;4)-beta-linkages in chitin and chitodextrins.. Functionally, hydrolyzes chitin and may play a role in defense against fungal pathogens containing chitin. The protein is Chitinase 1 (Cht1) of Oryza sativa subsp. japonica (Rice).